Consider the following 445-residue polypeptide: MNRESFLLLLVLLFALPLHLQASSPCNNMADTTCISDSAKMFPPAIGVYHVKPMKNTLRHSLPLVAASLLTFNVDDNIRELRFTGAGSFHTKIDNVSQLVPLMAQLSMRGFGYKGRSKSWGKMLVSDALGMALMGGMVNAGKYSFGRLRPDGTAANSYPSGHTATAFACATLFHLEYGSRSPWYSVAGYTVASFTGISRIVNNRHWASDVLCGAAVGILVGELGYWISDLIFRDPTGYNYKLTKKQEGTLESMVISLSTGNRYINRQMDFEGKTVERTDAFGMNLKTTFNPSFARWVRIGLQFSVSTEKQKGLTRERPAKVFVAPAISLGLSAGVEWHPWQRASVWAEILPSILFRTDFTNAQDKPDEMSSKLHRRSSFQPAFQVGVAYRVSDHMGIEAHAGYQLGEAVYHLMEETSTWSIIKKRATVPYRGFEFAVGLQFYPFR.

The first 22 residues, methionine 1–alanine 22, serve as a signal peptide directing secretion.

Its subcellular location is the periplasm. Its pathway is bacterial outer membrane biogenesis; LPS lipid A biosynthesis. Functionally, removes the 1-phosphate group from lipid A species. Absence of phosphate groups in lipid A renders the bacteria resistant to host-derived cationic antimicrobial peptides (CAMP) and allowing it to camouflage itself from the host innate immune response. This Porphyromonas gingivalis (strain ATCC 33277 / DSM 20709 / CIP 103683 / JCM 12257 / NCTC 11834 / 2561) protein is Lipid A 1-phosphatase.